Reading from the N-terminus, the 659-residue chain is Protein SCARECROW 1 (659 aa).

Disordered stretches follow at residues Met1–Leu33 and Ser188–Asp285. The segment covering Pro190–Gln228 has biased composition (pro residues). Residues Ala258–Ala271 show a composition bias toward low complexity. Residues Ala258–Leu289 adopt a coiled-coil conformation. Residues Ala272–Asp285 are compositionally biased toward basic and acidic residues. One can recognise a GRAS domain in the interval Lys282–Arg652. Residues Leu289 to Pro353 are leucine repeat I (LRI). Residues Leu296–Glu300 carry the LxCxE motif motif. The tract at residues Phe372–Gly437 is VHIID. The VHIID motif lies at Val403–Asp407. A leucine repeat II (LRII) region spans residues Ala447–Lys479. The segment at Val488–Asn575 is PFYRE. Positions Ala578–Arg652 are SAW.

This sequence belongs to the GRAS family. As to quaternary structure, interacts with SHR1, but not with SHR2.

The protein localises to the nucleus. Transcription factor required for quiescent center cells specification and maintenance of surrounding stem cells, and for the asymmetric cell division involved in radial pattern formation in roots. Essential for cell division but not differentiation of the ground tissue. Regulates the radial organization of the shoot axial organs. Restricts SHR movment and sequesters it into the nucleus of the endodermis. This chain is Protein SCARECROW 1 (SCR1), found in Oryza sativa subsp. indica (Rice).